The chain runs to 180 residues: ATP-dependent protease subunit HslV (180 aa).

The active site involves T7. A165, C168, and T171 together coordinate Na(+).

Belongs to the peptidase T1B family. HslV subfamily. As to quaternary structure, a double ring-shaped homohexamer of HslV is capped on each side by a ring-shaped HslU homohexamer. The assembly of the HslU/HslV complex is dependent on binding of ATP.

The protein localises to the cytoplasm. The enzyme catalyses ATP-dependent cleavage of peptide bonds with broad specificity.. Allosterically activated by HslU binding. Its function is as follows. Protease subunit of a proteasome-like degradation complex believed to be a general protein degrading machinery. The chain is ATP-dependent protease subunit HslV from Geobacillus kaustophilus (strain HTA426).